Reading from the N-terminus, the 86-residue chain is Probable weak neurotoxin NNAM2I (86 aa).

Residues Met-1–Thr-21 form the signal peptide. Disulfide bonds link Cys-24/Cys-45, Cys-27/Cys-32, Cys-38/Cys-63, Cys-67/Cys-78, and Cys-79/Cys-84.

Belongs to the three-finger toxin family. Ancestral subfamily. Orphan group II sub-subfamily. Expressed by the venom gland.

The protein localises to the secreted. In terms of biological role, binds with low affinity to muscular (alpha-1-beta-1-delta-epsilon/CHRNA1-CHRNB1-CHRND-CHRNE) and very low affinity to neuronal (alpha-7/CHRNA7) nicotinic acetylcholine receptor (nAChR). This chain is Probable weak neurotoxin NNAM2I, found in Naja atra (Chinese cobra).